A 563-amino-acid chain; its full sequence is Membrane protein insertase YidC (563 aa).

Residues 6-26 (TILWMIFSFSLLLLWNNWQIH) form a helical membrane-spanning segment. A disordered region spans residues 36–68 (PPASSAASPAEGQQAAANGQAATPSVPTTPAAA). Transmembrane regions (helical) follow at residues 373–393 (WGWA…PLAA), 443–463 (LPMV…LASV), 482–502 (PYFI…KLNP), and 512–532 (VMMI…AGLV).

It belongs to the OXA1/ALB3/YidC family. Type 1 subfamily. Interacts with the Sec translocase complex via SecD. Specifically interacts with transmembrane segments of nascent integral membrane proteins during membrane integration.

It is found in the cell inner membrane. In terms of biological role, required for the insertion and/or proper folding and/or complex formation of integral membrane proteins into the membrane. Involved in integration of membrane proteins that insert both dependently and independently of the Sec translocase complex, as well as at least some lipoproteins. Aids folding of multispanning membrane proteins. The polypeptide is Membrane protein insertase YidC (Bordetella petrii (strain ATCC BAA-461 / DSM 12804 / CCUG 43448)).